Reading from the N-terminus, the 156-residue chain is ATP synthase subunit b (156 aa).

Residues 7–27 (LIGQLIAFALFVAFCMKFVWP) form a helical membrane-spanning segment.

This sequence belongs to the ATPase B chain family. F-type ATPases have 2 components, F(1) - the catalytic core - and F(0) - the membrane proton channel. F(1) has five subunits: alpha(3), beta(3), gamma(1), delta(1), epsilon(1). F(0) has three main subunits: a(1), b(2) and c(10-14). The alpha and beta chains form an alternating ring which encloses part of the gamma chain. F(1) is attached to F(0) by a central stalk formed by the gamma and epsilon chains, while a peripheral stalk is formed by the delta and b chains.

The protein resides in the cell inner membrane. In terms of biological role, f(1)F(0) ATP synthase produces ATP from ADP in the presence of a proton or sodium gradient. F-type ATPases consist of two structural domains, F(1) containing the extramembraneous catalytic core and F(0) containing the membrane proton channel, linked together by a central stalk and a peripheral stalk. During catalysis, ATP synthesis in the catalytic domain of F(1) is coupled via a rotary mechanism of the central stalk subunits to proton translocation. Functionally, component of the F(0) channel, it forms part of the peripheral stalk, linking F(1) to F(0). In Actinobacillus pleuropneumoniae serotype 5b (strain L20), this protein is ATP synthase subunit b.